Reading from the N-terminus, the 532-residue chain is ATP synthase subunit alpha (532 aa).

Position 171–178 (171–178) interacts with ATP; that stretch reads GDRQTGKT.

It belongs to the ATPase alpha/beta chains family. As to quaternary structure, F-type ATPases have 2 components, CF(1) - the catalytic core - and CF(0) - the membrane proton channel. CF(1) has five subunits: alpha(3), beta(3), gamma(1), delta(1), epsilon(1). CF(0) has three main subunits: a(1), b(2) and c(9-12). The alpha and beta chains form an alternating ring which encloses part of the gamma chain. CF(1) is attached to CF(0) by a central stalk formed by the gamma and epsilon chains, while a peripheral stalk is formed by the delta and b chains.

The protein resides in the cell membrane. It catalyses the reaction ATP + H2O + 4 H(+)(in) = ADP + phosphate + 5 H(+)(out). In terms of biological role, produces ATP from ADP in the presence of a proton gradient across the membrane. The alpha chain is a regulatory subunit. In Amoebophilus asiaticus (strain 5a2), this protein is ATP synthase subunit alpha.